The following is a 758-amino-acid chain: Zinc finger protein VAR3, chloroplastic (758 aa).

The segment at 122–502 (FPGFPDELLR…PKEETQIGLI (381 aa)) is 3 X approximate repeat. 2 RanBP2-type zinc fingers span residues 276–305 (KRGD…ARPK) and 308–338 (LTGS…KRPR). Residues 368–415 (RWLSKVAQGGSDANSVDTDEDFPEIMPLRKGVNRYVVSTRKPPLERRL) form repeat 1. 5 disordered regions span residues 410 to 470 (PLER…RFES), 512 to 545 (GGNQ…SEEP), 572 to 606 (EKMP…DSDF), 629 to 654 (TLPA…INKS), and 727 to 758 (KRKT…KGDK). Basic and acidic residues-rich tracts occupy residues 457 to 469 (RSDD…RRFE), 519 to 545 (QEDK…SEEP), and 572 to 581 (EKMPMRKGEN). The stretch at 547–596 (RWFKRVTELHNVSDLESAIPQEISPEKMPMRKGENRFVVSRKKDRSLTSP) is repeat 2. Copy 3 of the repeat occupies 688–736 (RWFKRVAEIKNISELSEIPDEDFPSIMPMRKGVNRFVVSKRKTPLERRL).

In terms of assembly, interacts in vitro with the chloroplast-located protein CCD4/NCED4. Homodimer. Interacts with ORRM1. Interacts with PCMP-H51/CRR28 and PCMP-H12/OTP82. Interacts with ORRM6. Weakly expressed in leaves and roots.

The protein localises to the plastid. It localises to the chloroplast. Functionally, probable component of some protein complex required for chloroplast and palisade cell development. Involved in C-to-U editing of chloroplastic RNA. Controls a large number of chloroplastic editing sites. Binds the editing recognition trans-factors PCMP-H51/CRR28 and PCMP-H12/OTP82. This chain is Zinc finger protein VAR3, chloroplastic, found in Arabidopsis thaliana (Mouse-ear cress).